The following is a 200-amino-acid chain: Mpv17-like protein 2 (200 aa).

A run of 3 helical transmembrane segments spans residues 24–40 (ALLLTNTLGCGVLMAAG), 63–83 (ASMFAVGCSMGPFLHFWYLWL), and 102–122 (VLVDQTVASPILGVWYFLGLG).

The protein belongs to the peroxisomal membrane protein PXMP2/4 family. In terms of assembly, interacts with the large mitochondrial ribosomal subunit.

The protein localises to the membrane. It localises to the mitochondrion inner membrane. In terms of biological role, required for the assembly and stability of the mitochondrial ribosome. Is a positive regulator of mitochondrial protein synthesis. In Mus musculus (Mouse), this protein is Mpv17-like protein 2 (Mpv17l2).